The following is a 433-amino-acid chain: Glutamate-1-semialdehyde 2,1-aminomutase (433 aa).

K271 is modified (N6-(pyridoxal phosphate)lysine).

This sequence belongs to the class-III pyridoxal-phosphate-dependent aminotransferase family. HemL subfamily. As to quaternary structure, homodimer. Requires pyridoxal 5'-phosphate as cofactor.

The protein localises to the cytoplasm. It catalyses the reaction (S)-4-amino-5-oxopentanoate = 5-aminolevulinate. It functions in the pathway porphyrin-containing compound metabolism; protoporphyrin-IX biosynthesis; 5-aminolevulinate from L-glutamyl-tRNA(Glu): step 2/2. The protein operates within porphyrin-containing compound metabolism; chlorophyll biosynthesis. This is Glutamate-1-semialdehyde 2,1-aminomutase from Prochlorococcus marinus (strain MIT 9301).